A 297-amino-acid polypeptide reads, in one-letter code: N-acetylmuramic acid 6-phosphate etherase (297 aa).

An SIS domain is found at Ile55–Lys218. Residue Glu83 is the Proton donor of the active site. Residue Glu114 is part of the active site.

It belongs to the GCKR-like family. MurNAc-6-P etherase subfamily. As to quaternary structure, homodimer.

It carries out the reaction N-acetyl-D-muramate 6-phosphate + H2O = N-acetyl-D-glucosamine 6-phosphate + (R)-lactate. The protein operates within amino-sugar metabolism; N-acetylmuramate degradation. Specifically catalyzes the cleavage of the D-lactyl ether substituent of MurNAc 6-phosphate, producing GlcNAc 6-phosphate and D-lactate. This chain is N-acetylmuramic acid 6-phosphate etherase, found in Oenococcus oeni (strain ATCC BAA-331 / PSU-1).